A 227-amino-acid chain; its full sequence is MVKGIFITATGTDIGKTYITALIVKKLREFNINCGYYKAALSGAERIDGKLIAGDANYVYNIADIKGDPNDAVSYIFEQAVSPHLAAKLNNVEISMEKIKKDFSYIKNKHDYITVEGSGGIICPISMGKEKIMLENIIKSFKLPAIVVADAGLGTINSTILTLQYIKEKNISVKMILLNNYNHEDIIHIENKRYLSDNLPIPVYTCNKNSNNLEIPAEKLIEYYEEI.

D13–Y18 is a binding site for ATP. T17 is a Mg(2+) binding site. The active site involves K38. S42 is a substrate binding site. Residues D55, E116 to G119, and N179 to N180 each bind ATP. Positions 55 and 116 each coordinate Mg(2+).

Belongs to the dethiobiotin synthetase family. In terms of assembly, homodimer. Requires Mg(2+) as cofactor.

Its subcellular location is the cytoplasm. It carries out the reaction (7R,8S)-7,8-diammoniononanoate + CO2 + ATP = (4R,5S)-dethiobiotin + ADP + phosphate + 3 H(+). It functions in the pathway cofactor biosynthesis; biotin biosynthesis; biotin from 7,8-diaminononanoate: step 1/2. Catalyzes a mechanistically unusual reaction, the ATP-dependent insertion of CO2 between the N7 and N8 nitrogen atoms of 7,8-diaminopelargonic acid (DAPA, also called 7,8-diammoniononanoate) to form a ureido ring. The sequence is that of ATP-dependent dethiobiotin synthetase BioD from Clostridium botulinum (strain 657 / Type Ba4).